A 425-amino-acid polypeptide reads, in one-letter code: Elongation factor 1-alpha (425 aa).

The tr-type G domain occupies 5 to 221 (KPHMNLAVIG…DTFKEPSKPT (217 aa)). Residues 14–21 (GHIDHGKS) form a G1 region. GTP is bound at residue 14–21 (GHIDHGKS). Mg(2+) is bound at residue Ser21. A G2 region spans residues 70 to 74 (GITID). A G3 region spans residues 91-94 (DCPG). GTP-binding positions include 91–95 (DCPGH) and 146–149 (NKMD). Positions 146–149 (NKMD) are G4. The G5 stretch occupies residues 185-187 (SSL).

This sequence belongs to the TRAFAC class translation factor GTPase superfamily. Classic translation factor GTPase family. EF-Tu/EF-1A subfamily.

It is found in the cytoplasm. The enzyme catalyses GTP + H2O = GDP + phosphate + H(+). Its function is as follows. GTP hydrolase that promotes the GTP-dependent binding of aminoacyl-tRNA to the A-site of ribosomes during protein biosynthesis. The chain is Elongation factor 1-alpha from Methanoregula boonei (strain DSM 21154 / JCM 14090 / 6A8).